The following is a 1444-amino-acid chain: Cleavage and polyadenylation specificity factor subunit 1 (1444 aa).

Disordered stretches follow at residues 406 to 439, 549 to 571, 716 to 778, and 902 to 924; these read PPAS…SKSV, EETL…DDGR, GGVR…PAPF, and FREK…EGTG. Residues 413–422 show a composition bias toward basic and acidic residues; sequence EAADKEEPPS. Residues Ser757 and Ser767 each carry the phosphoserine modification. Residues 759–776 show a composition bias toward basic and acidic residues; sequence SKEEARRSSQPPADRDPA. The short motif at 894–909 is the Nuclear localization signal element; sequence KKVPHNINFREKKPKP.

The protein belongs to the CPSF1 family. As to quaternary structure, component of the cleavage and polyadenylation specificity factor (CPSF) complex, composed of CPSF1, CPSF2, CPSF3, CPSF4 and FIP1L1. Found in a complex with CPSF1, FIP1L1 and PAPOLA. Interacts with FIP1L1, TENT2/GLD2 and SRRM1. Interacts with TUT1; the interaction is direct and mediates the recruitment of the CPSF complex on the 3'UTR of selected pre-mRNAs. In terms of processing, the N-terminus is blocked.

The protein resides in the nucleus. It localises to the nucleoplasm. Its function is as follows. Component of the cleavage and polyadenylation specificity factor (CPSF) complex that plays a key role in pre-mRNA 3'-end formation, recognizing the AAUAAA signal sequence and interacting with poly(A) polymerase and other factors to bring about cleavage and poly(A) addition. This subunit is involved in the RNA recognition step of the polyadenylation reaction. May play a role in eye morphogenesis and the development of retinal ganglion cell projections to the midbrain. This Bos taurus (Bovine) protein is Cleavage and polyadenylation specificity factor subunit 1 (CPSF1).